Reading from the N-terminus, the 126-residue chain is MEKKKYNISVEATLEVIGGKWKCVILCHLTHGKKRTSELKRLMPNITQKMLTQQLRELEADGVINRIVYNQVPPKVEYELSEYGRSLEGILDMLCAWGANHINRVYGDTFSVLEESVLNDKLKQES.

Residues 8–106 (ISVEATLEVI…WGANHINRVY (99 aa)) form the HTH hxlR-type domain.

This is an uncharacterized protein from Bacillus subtilis (strain 168).